The chain runs to 659 residues: Biosynthetic arginine decarboxylase (659 aa).

Residue lysine 128 is modified to N6-(pyridoxal phosphate)lysine. 308-318 is a binding site for substrate; sequence FDVGGGLGVDY.

It belongs to the Orn/Lys/Arg decarboxylase class-II family. SpeA subfamily. Requires Mg(2+) as cofactor. The cofactor is pyridoxal 5'-phosphate.

It carries out the reaction L-arginine + H(+) = agmatine + CO2. Its pathway is amine and polyamine biosynthesis; agmatine biosynthesis; agmatine from L-arginine: step 1/1. In terms of biological role, catalyzes the biosynthesis of agmatine from arginine. The sequence is that of Biosynthetic arginine decarboxylase from Yersinia pestis.